The following is a 395-amino-acid chain: RNA demethylase ALKBH5 (395 aa).

Disordered stretches follow at residues 1 to 28 (MAAA…AGSR) and 47 to 83 (AAEP…EEEA). Ala2 bears the N-acetylalanine mark. Residue Lys58 forms a Glycyl lysine isopeptide (Lys-Gly) (interchain with G-Cter in ubiquitin) linkage. A compositionally biased stretch (basic and acidic residues) spans 60–83 (KYQEDSDPERSDYEEHQLQKEEEA). Phosphoserine occurs at positions 65 and 70. Residues 68–117 (ERSDYEEHQLQKEEEARKVKSGIRQIRLFSQDECSKIEARIDEVVSRAEK) are a coiled coil. Tyr72 is modified (phosphotyrosine). Lys87 is covalently cross-linked (Glycyl lysine isopeptide (Lys-Gly) (interchain with G-Cter in SUMO1)). Position 88 is a phosphoserine (Ser88). N6-acetyllysine is present on Lys133. Tyr140 is a catalytic residue. Residues Asn194, Tyr196, and His205 each contribute to the 2-oxoglutarate site. Cys231 and Cys268 are oxidised to a cystine. Lys236 bears the N6-acetyllysine mark. Residues His267 and Arg278 each contribute to the 2-oxoglutarate site. The tract at residues 294 to 395 (ETKSLSSSTL…PTRKVKMRRH (102 aa)) is disordered. Positions 296-306 (KSLSSSTLPPS) are enriched in low complexity. Residue Lys322 forms a Glycyl lysine isopeptide (Lys-Gly) (interchain with G-Cter in SUMO1) linkage. Ser326 carries the post-translational modification Phosphoserine. Lys329 participates in a covalent cross-link: Glycyl lysine isopeptide (Lys-Gly) (interchain with G-Cter in SUMO2). Residues 329–350 (KADPDAAHRPRILEMDKEENRR) show a composition bias toward basic and acidic residues. The residue at position 360 (Arg360) is an Omega-N-methylarginine. Phosphoserine occurs at positions 362, 372, 375, and 385.

This sequence belongs to the alkB family. As to quaternary structure, monomer. Interacts with RBM33; promoting desumoylation by SENP1 and recruitment to N(6)-methyladenosine-containing mRNAs. Interacts (when acetylated by KAT8) with PSPC1; interaction facilitates recognition of N(6)-methyladenosine (m6A) mRNA. Requires Fe(2+) as cofactor. In terms of processing, phosphorylated at Ser-88 and Ser-326 in response to reactive oxygen species (ROS), promoting sumoylation and inactivation. Post-translationally, acetylated by KAT8 at Lys-236, promoting interaction with PSPC1, thereby facilitating recognition of N(6)-methyladenosine (m6A) mRNA by ALKBH5. Deacetylated at Lys-236 by HDAC7. Sumoylated at Lys-87 and Lys-322 by PIAS4 following phosphorylation at Ser-88 and Ser-326 in response to reactive oxygen species (ROS), inhibiting the RNA demethylase activity. Desumoylated by SENP1; relieving RNA demethylase inhibition, leading to N(6)-methyladenosine-containing mRNAs demethylation. In terms of processing, ubiquitinated at Lys-58 via 'Lys-48'-linked polyubiquitin chain, leading to its degradation by the proteasome. Deubiquitinated at Lys-58 by USP9X, promoting its stabilizazion.

The protein resides in the nucleus speckle. It catalyses the reaction an N(6)-methyladenosine in mRNA + 2-oxoglutarate + O2 = an adenosine in mRNA + formaldehyde + succinate + CO2. With respect to regulation, RNA demethylase activity is inhibited following sumoylation. Inhibition is relieved following desumoylation. Functionally, dioxygenase that specifically demethylates N(6)-methyladenosine (m6A) RNA, the most prevalent internal modification of messenger RNA (mRNA) in higher eukaryotes. Demethylates RNA by oxidative demethylation, which requires molecular oxygen, alpha-ketoglutarate and iron. Demethylation of m6A mRNA affects mRNA processing, translation and export. Can also demethylate N(6)-methyladenosine in single-stranded DNA (in vitro). Required for the late meiotic and haploid phases of spermatogenesis by mediating m6A demethylation in spermatocytes and round spermatids: m6A demethylation of target transcripts is required for correct splicing and the production of longer 3'-UTR mRNAs in male germ cells. Involved in paraspeckle assembly, a nuclear membraneless organelle, by undergoing liquid-liquid phase separation. Paraspeckle assembly is coupled with m6A demethylation of RNAs, such as NEAT1 non-coding RNA. Also acts as a negative regulator of T-cell development: inhibits gamma-delta T-cell proliferation via demethylation of JAG1 and NOTCH2 transcripts. Inhibits regulatory T-cell (Treg) recruitment by mediating demethylation and destabilization of CCL28 mRNAs. This is RNA demethylase ALKBH5 (Alkbh5) from Rattus norvegicus (Rat).